A 573-amino-acid polypeptide reads, in one-letter code: Solute carrier family 41 member 2 (573 aa).

At 1–162 (MTHSKGRPVT…KESSGVMALQ (162 aa)) the chain is on the extracellular side. Residues serine 137 and serine 138 each carry the phosphoserine modification. Residues 163–183 (ILVPFLLAGFGTVSAGMVLDI) form a helical membrane-spanning segment. The Cytoplasmic segment spans residues 184–195 (VQHWEVFKNVTE). The helical transmembrane segment at 196–216 (VFILVPALLGLKGNLEMTLAS) threads the bilayer. Over 217-245 (RLSTAVNVGKMDSPIEKWNLIIGNLALKQ) the chain is Extracellular. A helical transmembrane segment spans residues 246 to 266 (VQATVVGFLAAVAAIILGWIP). Residues 267–282 (EGKYYLSHSILLCSSS) lie on the Cytoplasmic side of the membrane. Residues 283–303 (VATAFIASLLQGIIMVGVIVG) form a helical membrane-spanning segment. Residues 304-313 (SKKTGINPDN) are Extracellular-facing. A helical transmembrane segment spans residues 314 to 334 (VATPIAASFGDLITLAILAWI). Residues 335 to 347 (SQGLYSCLETYYY) lie on the Cytoplasmic side of the membrane. The helical transmembrane segment at 348–368 (ISPLVCAFFLALTPIWIIIAA) threads the bilayer. Residues 369 to 376 (KHPATRTV) lie on the Extracellular side of the membrane. A helical membrane pass occupies residues 377 to 397 (LHSGWEPVITAMVISSIGGLI). At 398-406 (LDTTVSDPN) the chain is on the cytoplasmic side. The helical transmembrane segment at 407 to 427 (LVGIVVYTPVINGIGGNLVAI) threads the bilayer. Topologically, residues 428 to 469 (QASRISTYLHLHSIPGELPEEPKGCSYPFRTFFGSGVNNKSA) are extracellular. The helical transmembrane segment at 470-490 (QVLLLFVIPGHLIFLYTIHLM) threads the bilayer. The Cytoplasmic segment spans residues 491 to 498 (KSGHTSLT). A helical membrane pass occupies residues 499–519 (VVFVVVYLFAAVLQVFTLLWI). Residues 520-543 (ADWMVHRFWRKGKDPDSFSIPYLT) lie on the Extracellular side of the membrane. The chain crosses the membrane as a helical span at residues 544–564 (ALGDLLGTALLALSFHFLWLI). The Cytoplasmic portion of the chain corresponds to 565-573 (GDRDGDVGD).

Belongs to the SLC41A transporter family.

It localises to the cell membrane. It carries out the reaction Mg(2+)(in) = Mg(2+)(out). The catalysed reaction is Mn(2+)(in) = Mn(2+)(out). The enzyme catalyses Co(2+)(in) = Co(2+)(out). It catalyses the reaction Ni(2+)(in) = Ni(2+)(out). It carries out the reaction Fe(2+)(in) = Fe(2+)(out). Its function is as follows. Acts as a plasma-membrane magnesium transporter. Can also mediate the transport of other divalent metal cations in an order of Ba(2+) &gt; Ni(2+) &gt; Co(2+) &gt; Fe(2+) &gt; Mn(2+). This is Solute carrier family 41 member 2 (Slc41a2) from Mus musculus (Mouse).